We begin with the raw amino-acid sequence, 274 residues long: tRNA-cytidine(32) 2-sulfurtransferase (274 aa).

The PP-loop motif motif lies at 40–45; it reads SGGKDS. [4Fe-4S] cluster-binding residues include Cys-115, Cys-118, and Cys-206.

The protein belongs to the TtcA family. As to quaternary structure, homodimer. Mg(2+) is required as a cofactor. Requires [4Fe-4S] cluster as cofactor.

It localises to the cytoplasm. It catalyses the reaction cytidine(32) in tRNA + S-sulfanyl-L-cysteinyl-[cysteine desulfurase] + AH2 + ATP = 2-thiocytidine(32) in tRNA + L-cysteinyl-[cysteine desulfurase] + A + AMP + diphosphate + H(+). It functions in the pathway tRNA modification. In terms of biological role, catalyzes the ATP-dependent 2-thiolation of cytidine in position 32 of tRNA, to form 2-thiocytidine (s(2)C32). The sulfur atoms are provided by the cysteine/cysteine desulfurase (IscS) system. In Pseudomonas fluorescens (strain Pf0-1), this protein is tRNA-cytidine(32) 2-sulfurtransferase.